The primary structure comprises 216 residues: [5-(aminomethyl)furan-3-yl]methyl phosphate kinase (216 aa).

ATP-binding positions include 5 to 9 (KIGGS), Gly39, Asp142, 147 to 152 (YDKFPG), and Gly166.

Belongs to the MfnE family. Homotrimer. Mg(2+) serves as cofactor.

It catalyses the reaction [5-(aminomethyl)-3-furyl]methyl phosphate + ATP = [5-(aminomethyl)furan-3-yl]methyl diphosphate + ADP. Its pathway is cofactor biosynthesis; methanofuran biosynthesis. With respect to regulation, inhibited by EDTA. Its function is as follows. Catalyzes the formation of 5-(aminomethyl)-3-furanmethanol diphosphate (F1-PP) from 5-(aminomethyl)-3-furanmethanol phosphate (F1-P) and ATP. In vitro, can also act as an adenylate kinase that catalyzes the transfer of a phosphoryl group from ATP to AMP, generating two molecules of ADP. In Methanocaldococcus jannaschii (strain ATCC 43067 / DSM 2661 / JAL-1 / JCM 10045 / NBRC 100440) (Methanococcus jannaschii), this protein is [5-(aminomethyl)furan-3-yl]methyl phosphate kinase.